A 284-amino-acid polypeptide reads, in one-letter code: Bifunctional protein FolD (284 aa).

NADP(+) contacts are provided by residues 165–167 (GRS) and S190.

Belongs to the tetrahydrofolate dehydrogenase/cyclohydrolase family. As to quaternary structure, homodimer.

The enzyme catalyses (6R)-5,10-methylene-5,6,7,8-tetrahydrofolate + NADP(+) = (6R)-5,10-methenyltetrahydrofolate + NADPH. It carries out the reaction (6R)-5,10-methenyltetrahydrofolate + H2O = (6R)-10-formyltetrahydrofolate + H(+). It participates in one-carbon metabolism; tetrahydrofolate interconversion. In terms of biological role, catalyzes the oxidation of 5,10-methylenetetrahydrofolate to 5,10-methenyltetrahydrofolate and then the hydrolysis of 5,10-methenyltetrahydrofolate to 10-formyltetrahydrofolate. The chain is Bifunctional protein FolD from Streptococcus pyogenes serotype M28 (strain MGAS6180).